The sequence spans 88 residues: Large ribosomal subunit protein bL27 (88 aa).

Positions 1 to 21 (MAHKKGTGSTRNGRDSNAKRL) are disordered.

This sequence belongs to the bacterial ribosomal protein bL27 family.

This chain is Large ribosomal subunit protein bL27, found in Parasynechococcus marenigrum (strain WH8102).